A 118-amino-acid chain; its full sequence is Large ribosomal subunit protein bL20 (118 aa).

This sequence belongs to the bacterial ribosomal protein bL20 family.

In terms of biological role, binds directly to 23S ribosomal RNA and is necessary for the in vitro assembly process of the 50S ribosomal subunit. It is not involved in the protein synthesizing functions of that subunit. This Macrococcus caseolyticus (strain JCSC5402) (Macrococcoides caseolyticum) protein is Large ribosomal subunit protein bL20.